The primary structure comprises 455 residues: MEDPARTQDILGQLPILKAYNHILLGFALSEDISRESVVQALNAAALQLATSVPWIGGKVVNVGSGPGNTGLFRSVPCELFAPPNSILRVKDVTADYPSYEEIVSAKGPISMLDGSIIAPKPAFPVSYVDCESDPAPALLIQATFLKGGVLLDFAAQHNLSDGGGVIQMINLVATTLRGEKIPEKAIVQANRDRRDVIRLLDPAEPMLDHSHLVRPPPSAIPANPVVSPDNFIWQYFRFSASTLGALKNIASNPADFDPSVKFISTDDALCAFLWQRIATVRLRRRQTPDDLCKMTRAVDIRRTLQVPSEYMGVMVYNVSGRLPLGQLATASLARAASELRKALNSIDEYAVRSFATFVARQPDKSTLAYAGKFNPDVDMGVSSMASVPLYRADFGPLGAPGLVRRPNFAPVLSTIYVMPQTVEGDVDVLICLTREDIGALRADPEWTAYAEYIG.

The protein belongs to the trichothecene 3-O-acetyltransferase family.

It participates in secondary metabolite biosynthesis. Functionally, O-acetyltransferase; part of the gene cluster that mediates the biosynthesis of azaphilone pigments (MonAzPs), a complex mixture of compounds with a common azaphilone skeleton very widely used as food colorants. Within the pathway, pigD directly transfers the fatty acyl chain from the beta-ketoacyl-ACP produced by the pigJ-pigK fatty acid synthase (FAS) to the C-4 alcohol. The first step of the pathway is performed by the nrPKS pigA that forms the hexaketide precursor from successive condensations of five malonyl-CoA units, with a simple acetyl-CoA starter unit. The role of esterase pigG is not clear, but it may play at most a supplementary role in the formation of the benzaldehyde produced by the pigA nrPKS. This very reactive benzaldehyde is intercepted by the pigC ketoreductase that to provide the first stable enzyme-free MonAzPs intermediate, 6-(4-hydroxy-2-oxopentyl)-3-methyl-2,4-dioxocyclohexane carbaldehyde, also known as M7PKS-1. The FAD-dependent monooxygenase pigN hydroxylates M7PKS-1 at C-4, which triggers the formation of the pyran ring. PigJ, pigK and pigD are involved in the acetylation of the pyran ring. PigJ and pigK form the two subunits of a dedicated fungal FAS that produces the side chain fatty acyl moiety of MonAzPs and pigD transfers the fatty acyl chain to the C-4 alcohol. PigM and pigO are involved in the elimination of the omega-1 alcohol. PigM acts as an O-acetyltransferase that synthesizes the putative O-11 acetyl intermediate whereas pigO eliminates acetic acid to yield an intermediate with a C10(11) double bond. The dehydration of the C-11 alcohol followed by the reduction of the C6(7) double bond by the NAD(P)H-dependent oxidoreductase pigE increases the electrophilicity of the C-5 ketone of the resulting acyl benzopyran. This in turn sets up the C-5 ketone for an intramolecular Knoevenagel aldol condensation with the C-20 enol of the side chain. This condensation affords the characteristic linear tricyclic carbon skeletons of the yellow pigments that serve as the common precursors for the classical yellow pigments monascin and ankaflavin, orange pigments rubopunctatin and monascorubrin, and red pigments ribropunctamine and monascorubramine. The FAD-dependent oxidoreductase pigF is especially invoved in the biosynthesis of orange and red pigments via desaturation of C6(7). The polypeptide is O-acyltransferase pigD (Monascus ruber (Mold)).